The sequence spans 1167 residues: RNA-directed RNA polymerase (1167 aa).

In terms of domain architecture, RdRp catalytic spans 553–735 (LTYGILAEAT…KALASYTGLE (183 aa)).

Belongs to the reoviridae RNA-directed RNA polymerase family. Interacts with VP3 (Potential). Interacts with VP2 (Potential). Interacts with NSP5; this interaction is probably necessary for the formation of functional virus factories.

The protein localises to the virion. It carries out the reaction RNA(n) + a ribonucleoside 5'-triphosphate = RNA(n+1) + diphosphate. Functionally, RNA-directed RNA polymerase that is involved in both transcription and genome replication. Together with VP3 capping enzyme, forms an enzyme complex positioned near the channels situated at each of the five-fold vertices of the core. Following infection, the outermost layer of the virus is lost, leaving a double-layered particle (DLP) made up of the core and VP6 shell. VP1 then catalyzes the transcription of fully conservative plus-strand genomic RNAs that are extruded through the DLP's channels into the cytoplasm where they function as mRNAs for translation of viral proteins. One copy of each of the viral (+)RNAs is also recruited during core assembly, together with newly synthesized polymerase complexes and VP2. The polymerase of these novo-formed particles catalyzes the synthesis of complementary minus-strands leading to dsDNA formation. To do so, the polymerase specifically recognizes conserved 3' sequence(s) in plus-strand RNA templates. Once dsRNA synthesis is complete, the polymerase switches to the transcriptional mode, thus providing secondary transcription. This is RNA-directed RNA polymerase from Rotavirus X (strain RVX/Human/China/NADRV-J19/1997/GXP[X]) (RV ADRV-N).